Here is a 479-residue protein sequence, read N- to C-terminus: Zinc metalloproteinase/disintegrin PMMP-1 (479 aa).

The N-terminal stretch at 1–20 is a signal peptide; that stretch reads MIQVLLVTICLAVFPYQGSS. Positions 21–188 are excised as a propeptide; the sequence is IILESGNVND…PIKKASKLVV (168 aa). The region spanning 194–390 is the Peptidase M12B domain; that stretch reads RYVELVIVAD…HNPQCILNKP (197 aa). Disulfide bonds link Cys-305/Cys-385, Cys-345/Cys-369, and Cys-347/Cys-352. His-330 is a binding site for Zn(2+). Glu-331 is a catalytic residue. The Zn(2+) site is built by His-334 and His-339. N-linked (GlcNAc...) asparagine glycosylation is present at Asn-368. Residues 391–408 constitute a propeptide that is removed on maturation; sequence LRTDTVSTPVSGNELLEA. The Disintegrin domain maps to 398-479; the sequence is TPVSGNELLE…ADCPRNGLYG (82 aa). 6 disulfides stabilise this stretch: Cys-412–Cys-427, Cys-414–Cys-422, Cys-421–Cys-444, Cys-435–Cys-441, Cys-440–Cys-465, and Cys-453–Cys-472. The Cell attachment site motif lies at 457–459; sequence RGD.

This sequence belongs to the venom metalloproteinase (M12B) family. P-II subfamily. P-IIa sub-subfamily. Monomer. Requires Zn(2+) as cofactor. Expressed by the venom gland.

The protein resides in the secreted. Impairs hemostasis in the envenomed animal. Its function is as follows. Inhibits platelet aggregation. The polypeptide is Zinc metalloproteinase/disintegrin PMMP-1 (Protobothrops mucrosquamatus (Taiwan habu)).